We begin with the raw amino-acid sequence, 120 residues long: Guanidine hydrolase-activating protein A (120 aa).

Residues H2, E3, and E41 each coordinate Ni(2+). Positions 74, 77, 91, and 94 each coordinate Zn(2+).

This sequence belongs to the HypA/HybF family.

Its function is as follows. Involved in the maturation of the nickel-dependent guanidine hydrolase GdmH. Required for nickel insertion into the metal center of GdmH. Seems to be required only for GdmH activation and not for activity. In Synechocystis sp. (strain ATCC 27184 / PCC 6803 / Kazusa), this protein is Guanidine hydrolase-activating protein A.